A 177-amino-acid polypeptide reads, in one-letter code: Superoxide dismutase [Cu-Zn] 1 (177 aa).

A signal peptide spans 1 to 20; sequence MKYTILSLVAGALISCSAMA. Cu cation-binding residues include His69, His71, and His94. Cysteines 76 and 172 form a disulfide. Zn(2+) is bound by residues His94, His103, His112, and Asp115. His150 is a Cu cation binding site.

It belongs to the Cu-Zn superoxide dismutase family. As to quaternary structure, monomer. It depends on Cu cation as a cofactor. Requires Zn(2+) as cofactor.

The protein localises to the periplasm. It catalyses the reaction 2 superoxide + 2 H(+) = H2O2 + O2. Functionally, destroys radicals which are normally produced within the cells and which are toxic to biological systems. In Salmonella typhimurium (strain 4/74), this protein is Superoxide dismutase [Cu-Zn] 1 (sodC1).